We begin with the raw amino-acid sequence, 549 residues long: Glucose-6-phosphate isomerase 1 (549 aa).

Glu-358 acts as the Proton donor in catalysis. Active-site residues include His-389 and Lys-513.

The protein belongs to the GPI family.

The protein localises to the cytoplasm. The enzyme catalyses alpha-D-glucose 6-phosphate = beta-D-fructose 6-phosphate. It participates in carbohydrate biosynthesis; gluconeogenesis. Its pathway is carbohydrate degradation; glycolysis; D-glyceraldehyde 3-phosphate and glycerone phosphate from D-glucose: step 2/4. Its function is as follows. Catalyzes the reversible isomerization of glucose-6-phosphate to fructose-6-phosphate. This is Glucose-6-phosphate isomerase 1 from Streptomyces avermitilis (strain ATCC 31267 / DSM 46492 / JCM 5070 / NBRC 14893 / NCIMB 12804 / NRRL 8165 / MA-4680).